The chain runs to 120 residues: uncharacterized protein (120 aa).

The protein resides in the virion. This is an uncharacterized protein from Acanthamoeba polyphaga mimivirus (APMV).